Here is a 310-residue protein sequence, read N- to C-terminus: Mitochondrial 2-oxodicarboxylate carrier 1 (310 aa).

Helical transmembrane passes span 9–29, 78–97, 126–146, 179–199, 219–239, and 281–301; these read LPFIYQFTAGAIAGVSELLVM, SHLYKGITSPILMEAPKRAI, IYSGASAGAVEAFVVAPFELV, GLEATIWRHVLWNAGYFGIIF, LIAGAIGGTVGCLLNTPFDVV, and MRLAPGGGLLLVVFTNVMDFF. Solcar repeat units lie at residues 9-108, 120-204, and 213-300; these read LPFI…FQTF, MTQK…IRKL, and EKTR…VMDF.

The protein belongs to the mitochondrial carrier (TC 2.A.29) family.

It localises to the mitochondrion inner membrane. Its function is as follows. Transports C5-C7 oxodicarboxylates across the inner membranes of mitochondria. Can transport 2-oxoadipate, 2-oxoglutarate, adipate, glutarate, 2-oxopimelate, oxaloacetate, citrate and malate. The main physiological role is probably to supply 2-oxoadipate and 2-oxoglutarate from the mitochondrial matrix to the cytosol where they are used in the biosynthesis of lysine and glutamate, respectively, and in lysine catabolism. In Saccharomyces cerevisiae (strain ATCC 204508 / S288c) (Baker's yeast), this protein is Mitochondrial 2-oxodicarboxylate carrier 1 (ODC1).